The chain runs to 849 residues: Protein lap1 (849 aa).

17 LRR repeats span residues 18-39 (VIDKLDYSNTPLTDFPEVWQHE), 41-62 (TLEELYLSTTRLQALPPQLFYC), 64-85 (GLRVLHVNSNNLESIPQAIGSL), 87-108 (QLQHLDLNRNLIVNVPEEIKSC), 110-131 (HLTHLDLSCNSLQRLPDAITSL), 133-155 (SLQELLLNETYLEFLPANFGRLV), 156-177 (NLRILELRLNNLMTLPKSMVRL), 179-200 (NLQRLDIGGNEFTELPEVVGEL), 202-224 (SLRELWIDFNQIRRVSANIGKLR), 225-246 (DLQHFEANGNLLDTLPSELSNW), 248-269 (NVEVLSICSNSLEAFPFSVGML), 271-292 (SLVTFKCESNGLTELPDSISYL), 294-315 (QLEELVLSHNKLIRLPSTIGML), 317-338 (SLRFLFADDNQLRQLPDELCSC), 340-362 (QLSVLSVANNQLSALPQNIGNLS), 363-384 (KMKVLNVVNNYINALPVSMLNL), and 386-407 (NLTSMWLSDNQSQPLVPLQYLD). The interval 716–752 (NNISNNLEPNPEEEDQELDDTMSQHSLNSTATNNTSK) is disordered. Over residues 725 to 735 (NPEEEDQELDD) the composition is skewed to acidic residues. Over residues 736-752 (TMSQHSLNSTATNNTSK) the composition is skewed to polar residues. In terms of domain architecture, PDZ spans 770–849 (VKQVTLKWEN…TVMNIMLSRK (80 aa)).

The protein belongs to the LAP (LRR and PDZ) protein family.

Functionally, may have a role in assembling adherens junctions. This chain is Protein lap1, found in Drosophila melanogaster (Fruit fly).